We begin with the raw amino-acid sequence, 300 residues long: U1 small nuclear ribonucleoprotein 70 kDa homolog (300 aa).

The region spanning arginine 107 to arginine 198 is the RRM domain. Disordered regions lie at residues glycine 204 to alanine 248 and asparagine 263 to tyrosine 300. The span at proline 265–valine 279 shows a compositional bias: low complexity.

In terms of assembly, component of the spliceosome, where it is associated with snRNP U1. Binds stem loop I of U1 snRNA. Interacts with mRNA.

The protein localises to the nucleus. Its function is as follows. Involved in nuclear mRNA splicing. The protein is U1 small nuclear ribonucleoprotein 70 kDa homolog (SNP1) of Saccharomyces cerevisiae (strain ATCC 204508 / S288c) (Baker's yeast).